The primary structure comprises 352 residues: N-terminal EF-hand calcium-binding protein 1 (352 aa).

The residue at position 4 (Ser4) is a Phosphoserine. EF-hand domains lie at 26-61 (KGMSIFLDILRRADKNDDGKLSFEEFKAYFADGVLS) and 60-95 (LSGEELHELFHTIDTHNTNNLDTEELCEYFSQHLGE). The Ca(2+) site is built by Asp39, Asn41, Asp43, Lys45, and Glu50. Residues 135-163 (LLKETLNQLQSLQNSLECAMETTEEQTRQ) are a coiled coil. The tract at residues 155-202 (ETTEEQTRQERQGPSKPEVLSIQWPGKRSSRRVQRHNSFSPNSPQFNV) is disordered. Residues 190–202 (HNSFSPNSPQFNV) are compositionally biased toward polar residues. Phosphoserine is present on residues Ser192 and Ser197. Positions 209-275 (EEDNQWMTQI…EEFQLALKHY (67 aa)) form a coiled coil. Positions 252–340 (MLVQRQMSVT…LETPELTSTM (89 aa)) constitute an ABM domain.

Interacts with STX1. May interact with CPNE6.

It localises to the cytoplasm. This Rattus norvegicus (Rat) protein is N-terminal EF-hand calcium-binding protein 1 (Necab1).